We begin with the raw amino-acid sequence, 77 residues long: Conotoxin VnMKLT1-012 (77 aa).

The N-terminal stretch at 1–22 (MKLTCMMIVAVLFLTAWTFVTA) is a signal peptide. Residues 23–48 (DDSRNGLDYLFPKARHEMNPKASRDI) constitute a propeptide that is removed on maturation. Intrachain disulfides connect Cys51–Cys68, Cys58–Cys72, and Cys67–Cys76.

It belongs to the conotoxin O1 superfamily. In terms of tissue distribution, expressed by the venom duct.

The protein localises to the secreted. The protein is Conotoxin VnMKLT1-012 of Conus ventricosus (Mediterranean cone).